Reading from the N-terminus, the 245-residue chain is tRNA pseudouridine synthase A (245 aa).

Asp-52 acts as the Nucleophile in catalysis. Tyr-110 is a substrate binding site.

This sequence belongs to the tRNA pseudouridine synthase TruA family. In terms of assembly, homodimer.

The enzyme catalyses uridine(38/39/40) in tRNA = pseudouridine(38/39/40) in tRNA. Formation of pseudouridine at positions 38, 39 and 40 in the anticodon stem and loop of transfer RNAs. The polypeptide is tRNA pseudouridine synthase A (Borrelia duttonii (strain Ly)).